We begin with the raw amino-acid sequence, 218 residues long: Ribonuclease HII (218 aa).

Residues Asp-13–Thr-202 enclose the RNase H type-2 domain. A divalent metal cation-binding residues include Asp-19, Glu-20, and Asp-111.

It belongs to the RNase HII family. It depends on Mn(2+) as a cofactor. The cofactor is Mg(2+).

It localises to the cytoplasm. The catalysed reaction is Endonucleolytic cleavage to 5'-phosphomonoester.. Endonuclease that specifically degrades the RNA of RNA-DNA hybrids. The protein is Ribonuclease HII of Pseudomonas syringae pv. syringae (strain B728a).